The primary structure comprises 400 residues: Enoyl-[acyl-carrier-protein] reductase [NADH] (400 aa).

Residues 48–53 (GSSSGY), 74–75 (FE), 111–112 (DA), and 139–140 (LA) each bind NAD(+). A substrate-binding site is contributed by Y225. The active-site Proton donor is the Y235. NAD(+) is bound by residues K244 and 273 to 275 (VVT).

Belongs to the TER reductase family. Monomer.

The enzyme catalyses a 2,3-saturated acyl-[ACP] + NAD(+) = a (2E)-enoyl-[ACP] + NADH + H(+). The protein operates within lipid metabolism; fatty acid biosynthesis. Its function is as follows. Involved in the final reduction of the elongation cycle of fatty acid synthesis (FAS II). Catalyzes the reduction of a carbon-carbon double bond in an enoyl moiety that is covalently linked to an acyl carrier protein (ACP). This Shewanella pealeana (strain ATCC 700345 / ANG-SQ1) protein is Enoyl-[acyl-carrier-protein] reductase [NADH].